Consider the following 129-residue polypeptide: Regulator of ribonuclease activity B (129 aa).

Belongs to the RraB family. Interacts with the C-terminal region of Rne.

It is found in the cytoplasm. In terms of biological role, globally modulates RNA abundance by binding to RNase E (Rne) and regulating its endonucleolytic activity. Can modulate Rne action in a substrate-dependent manner by altering the composition of the degradosome. The chain is Regulator of ribonuclease activity B from Shewanella denitrificans (strain OS217 / ATCC BAA-1090 / DSM 15013).